The sequence spans 111 residues: Cell division protein FtsB (111 aa).

Topologically, residues 1 to 3 are cytoplasmic; that stretch reads MRL. Residues 4 to 21 form a helical membrane-spanning segment; it reads LFLVLLVLLGLIQYPLWL. Residues 22–111 are Periplasmic-facing; sequence GKGGWFKVWD…PGQTASAPRR (90 aa). The stretch at 31–62 forms a coiled coil; that stretch reads DLQRQVAAQHETNDGLRARNAALEAEVRDLAT. The tract at residues 88–111 is disordered; that stretch reads VPPGTPVPQPAPGAPGQTASAPRR. Pro residues predominate over residues 90–100; the sequence is PGTPVPQPAPG. A compositionally biased stretch (low complexity) spans 101–111; that stretch reads APGQTASAPRR.

Belongs to the FtsB family. As to quaternary structure, part of a complex composed of FtsB, FtsL and FtsQ.

It is found in the cell inner membrane. Essential cell division protein. May link together the upstream cell division proteins, which are predominantly cytoplasmic, with the downstream cell division proteins, which are predominantly periplasmic. This Bordetella petrii (strain ATCC BAA-461 / DSM 12804 / CCUG 43448) protein is Cell division protein FtsB.